The following is a 564-amino-acid chain: Mitochondrial distribution and morphology protein 34 (564 aa).

Residues M1–E208 enclose the SMP-LTD domain. Disordered regions lie at residues E208 to N240, S336 to T397, Q404 to D423, R434 to Q517, and I532 to H564. A compositionally biased stretch (polar residues) spans S209 to P219. Over residues S351–R365 the composition is skewed to basic residues. Over residues V366–D376 the composition is skewed to basic and acidic residues. Residues S380–E390 are compositionally biased toward low complexity. 2 stretches are compositionally biased toward polar residues: residues G438–S462 and P477–I503.

Belongs to the MDM34 family. Component of the ER-mitochondria encounter structure (ERMES) or MDM complex, composed of mmm1, mdm10, mdm12 and mdm34.

It is found in the mitochondrion outer membrane. Functionally, component of the ERMES/MDM complex, which serves as a molecular tether to connect the endoplasmic reticulum (ER) and mitochondria. Components of this complex are involved in the control of mitochondrial shape and protein biogenesis, and function in nonvesicular lipid trafficking between the ER and mitochondria. Mdm34 is required for the interaction of the ER-resident membrane protein mmm1 and the outer mitochondrial membrane-resident beta-barrel protein mdm10. The chain is Mitochondrial distribution and morphology protein 34 from Talaromyces stipitatus (strain ATCC 10500 / CBS 375.48 / QM 6759 / NRRL 1006) (Penicillium stipitatum).